A 629-amino-acid chain; its full sequence is DNA mismatch repair protein MutL (629 aa).

It belongs to the DNA mismatch repair MutL/HexB family.

In terms of biological role, this protein is involved in the repair of mismatches in DNA. It is required for dam-dependent methyl-directed DNA mismatch repair. May act as a 'molecular matchmaker', a protein that promotes the formation of a stable complex between two or more DNA-binding proteins in an ATP-dependent manner without itself being part of a final effector complex. This Rhodospirillum rubrum (strain ATCC 11170 / ATH 1.1.1 / DSM 467 / LMG 4362 / NCIMB 8255 / S1) protein is DNA mismatch repair protein MutL.